We begin with the raw amino-acid sequence, 156 residues long: Small ribosomal subunit protein uS7 (156 aa).

Belongs to the universal ribosomal protein uS7 family. In terms of assembly, part of the 30S ribosomal subunit. Contacts proteins S9 and S11.

One of the primary rRNA binding proteins, it binds directly to 16S rRNA where it nucleates assembly of the head domain of the 30S subunit. Is located at the subunit interface close to the decoding center, probably blocks exit of the E-site tRNA. The polypeptide is Small ribosomal subunit protein uS7 (Bifidobacterium longum subsp. infantis (strain ATCC 15697 / DSM 20088 / JCM 1222 / NCTC 11817 / S12)).